A 536-amino-acid chain; its full sequence is UDP-N-acetylmuramate--L-alanine ligase (536 aa).

Gly133–Thr139 contacts ATP.

Belongs to the MurCDEF family.

It is found in the cytoplasm. It carries out the reaction UDP-N-acetyl-alpha-D-muramate + L-alanine + ATP = UDP-N-acetyl-alpha-D-muramoyl-L-alanine + ADP + phosphate + H(+). Its pathway is cell wall biogenesis; peptidoglycan biosynthesis. Cell wall formation. In Wolbachia sp. subsp. Brugia malayi (strain TRS), this protein is UDP-N-acetylmuramate--L-alanine ligase.